Consider the following 484-residue polypeptide: Phosphoenolpyruvate carboxylase (484 aa).

Belongs to the PEPCase type 2 family. As to quaternary structure, homotetramer. It depends on Mg(2+) as a cofactor.

It carries out the reaction oxaloacetate + phosphate = phosphoenolpyruvate + hydrogencarbonate. Its function is as follows. Catalyzes the irreversible beta-carboxylation of phosphoenolpyruvate (PEP) to form oxaloacetate (OAA), a four-carbon dicarboxylic acid source for the tricarboxylic acid cycle. The polypeptide is Phosphoenolpyruvate carboxylase (Methanospirillum hungatei JF-1 (strain ATCC 27890 / DSM 864 / NBRC 100397 / JF-1)).